Consider the following 659-residue polypeptide: Exoribonuclease 2 (659 aa).

Residues 189-532 (REDLTHLYFT…HRLIKQVLSN (344 aa)) enclose the RNB domain. In terms of domain architecture, S1 motif spans 576–658 (NVEFDGEIQD…ETRSVVGDVL (83 aa)).

Belongs to the RNR ribonuclease family. RNase II subfamily.

It localises to the cytoplasm. The enzyme catalyses Exonucleolytic cleavage in the 3'- to 5'-direction to yield nucleoside 5'-phosphates.. Involved in mRNA degradation. Hydrolyzes single-stranded polyribonucleotides processively in the 3' to 5' direction. The sequence is that of Exoribonuclease 2 from Glaesserella parasuis serovar 5 (strain SH0165) (Haemophilus parasuis).